We begin with the raw amino-acid sequence, 329 residues long: Oligopeptide transport ATP-binding protein AppF (329 aa).

Residues 10–261 (LELRDVKKYF…PLHPYTQALL (252 aa)) form the ABC transporter domain. Residue 53 to 60 (GESGCGKS) participates in ATP binding.

The protein belongs to the ABC transporter superfamily.

The protein resides in the cell membrane. Functionally, this protein is a component of an oligopeptide permease, a binding protein-dependent transport system. This APP system can completely substitute for the OPP system in both sporulation and genetic competence, though, unlike OPP, is incapable of transporting tripeptides. Probably responsible for energy coupling to the transport system. This chain is Oligopeptide transport ATP-binding protein AppF (appF), found in Bacillus subtilis (strain 168).